The following is a 588-amino-acid chain: MRIKKKNTSGNAKNFVTRSQAVRKLQVSLADFRRLCIFKGIYPREPRNKKKANKGSTAPTTFYYAKDIQYLMHEPVLNKFREHKTFAKKLTRALGRGEVSSAKKLDENRTSYKLDHIIKERYPSFPDAVRDIDDALNMLFLFANLPATDQVSSKITKDANEICNQWLAYVARERLVRKVFVSIKGVYYQASIRGEDVRWLVPFKFPENIPSDIDFRIMLTFLEFYSTLLHFVLYKLYTDSDLVYPPKVDIAKNKIISGLSSYILESETEENVLTATKLSEPTGETSNIDSETLKLAMKADENVDDTNPEDEQTENVETVELDAFQDNNKNKGDILAQPSQYESPVSTLFSDFVFYVGREVPIDILEFLILSCGGSVISEAALDKLETKDIDFSKVTHQIVDRPVLKNKVAGRTYIQPQWIFDCLNKAKLVPANLYLPGETLPPHLSPWGDASGYDPNVSDAEEEGEDDEDEDSEEGSGAEVEENVDEDEDDEELRAQKELELEAQGVKYSDIKDTEVKSKNKKRKAASTEAEEEKDLKMIMMSNKQRKLYKKMKYSNAKKEEKVENLKKKKKQISKTKEKLTKLEGKK.

The BRCT domain maps to 344–437; that stretch reads PVSTLFSDFV…KLVPANLYLP (94 aa). 2 disordered regions span residues 446-533 and 559-588; these read SPWG…EAEE and KKEE…EGKK. Residues 460–493 are compositionally biased toward acidic residues; that stretch reads DAEEEGEDDEDEDSEEGSGAEVEENVDEDEDDEE. Basic and acidic residues-rich tracts occupy residues 510–519 and 576–588; these read SDIKDTEVKS and KTKE…EGKK. The stretch at 512-588 forms a coiled coil; sequence IKDTEVKSKN…EKLTKLEGKK (77 aa).

It belongs to the pescadillo family. As to quaternary structure, component of the NOP7 complex, composed of ERB1, NOP7 and YTM1. The complex is held together by ERB1, which interacts with NOP7 via its N-terminal domain and with YTM1 via a high-affinity interaction between the seven-bladed beta-propeller domains of the 2 proteins. The NOP7 complex associates with the 66S pre-ribosome.

It is found in the nucleus. Its subcellular location is the nucleolus. The protein resides in the nucleoplasm. Functionally, component of the NOP7 complex, which is required for maturation of the 25S and 5.8S ribosomal RNAs and formation of the 60S ribosome. The sequence is that of Pescadillo homolog from Vanderwaltozyma polyspora (strain ATCC 22028 / DSM 70294 / BCRC 21397 / CBS 2163 / NBRC 10782 / NRRL Y-8283 / UCD 57-17) (Kluyveromyces polysporus).